We begin with the raw amino-acid sequence, 1435 residues long: Protein SPP41 (1435 aa).

7 disordered regions span residues 16–74, 88–265, 286–309, 322–424, 442–482, 519–708, and 934–972; these read VGNL…NIEI, VANA…ENTL, AKQT…VEAQ, ELLS…DDEF, ETST…DSLD, SVSD…MKVP, and QQLD…AGHT. Acidic residues predominate over residues 27 to 42; sequence GQEEGEVQGGEQEGDD. Basic and acidic residues-rich tracts occupy residues 53–63, 98–127, and 139–154; these read IEPKHPDDSQH, EQAK…KEQQ, and LKSD…ERRV. The UIM domain occupies 171–190; it reads QDDENLRMAILESLQELNTN. Over residues 196-205 the composition is skewed to basic and acidic residues; the sequence is EPEKHEHAAP. Residues 211–223 show a composition bias toward basic residues; sequence SKKSSKKKKKDKS. A compositionally biased stretch (basic and acidic residues) spans 224 to 234; it reads KNRESSKDKSS. The segment covering 235–249 has biased composition (basic residues); it reads KKSKSSSHSKKHAKD. Over residues 286-301 the composition is skewed to polar residues; it reads AKQTVDIQDNSHTDNT. Over residues 345–355 the composition is skewed to basic and acidic residues; sequence KAVEPPRKPTA. Residues 367–383 are compositionally biased toward basic residues; that stretch reads KPKKRPPQEKKKTKSKT. The segment covering 384-398 has biased composition (low complexity); that stretch reads SKAASTANKSPASES. Polar residues-rich tracts occupy residues 442–451 and 459–482; these read ETSTHTATQD and DFTS…DSLD. Composition is skewed to basic and acidic residues over residues 524–548, 610–628, and 637–652; these read LPHD…EKKT, KNKE…AREE, and KQRL…KIVE. Residues 665–674 show a composition bias toward basic residues; that stretch reads KSGKPKKPYR. Over residues 676 to 691 the composition is skewed to basic and acidic residues; that stretch reads WTPEELLKRSQEAEKP. The Nuclear localization signal signature appears at 683–699; it reads KRSQEAEKPRKVKKERK. A compositionally biased stretch (basic residues) spans 692 to 706; it reads RKVKKERKKKEKKMK. Lys-981 participates in a covalent cross-link: Glycyl lysine isopeptide (Lys-Gly) (interchain with G-Cter in SUMO). Positions 1005–1014 are enriched in basic and acidic residues; that stretch reads KLELTKRAES. A disordered region spans residues 1005 to 1125; that stretch reads KLELTKRAES…DSVNTTTGKP (121 aa). Residue Ser-1014 is modified to Phosphoserine. The span at 1021 to 1032 shows a compositional bias: polar residues; the sequence is NVETAKETQSVQ. Basic and acidic residues-rich tracts occupy residues 1033–1082 and 1091–1103; these read EIKE…EKIA and LSDK…KSTL. Residue Ser-1067 is modified to Phosphoserine. The span at 1108–1123 shows a compositional bias: polar residues; the sequence is AQLTGNEPDSVNTTTG. Residue Lys-1154 forms a Glycyl lysine isopeptide (Lys-Gly) (interchain with G-Cter in SUMO) linkage.

As to quaternary structure, interacts with PRP8 and RAP1.

The protein localises to the nucleus. Functionally, negative regulator of PRP3 and PRP4 genes. This chain is Protein SPP41 (SPP41), found in Saccharomyces cerevisiae (strain ATCC 204508 / S288c) (Baker's yeast).